The sequence spans 131 residues: Type IV wide pilus major component PilA4 (131 aa).

A propeptide spans 1–6 (MRNAKG) (leader sequence). Phenylalanine 7 bears the N-methylphenylalanine mark. The helical transmembrane segment at 7 to 27 (FTLIELLIVIAIIAILAAVLI) threads the bilayer. Cysteine 95 and cysteine 130 form a disulfide bridge.

In terms of assembly, interacts with PilQ. In terms of processing, found in three forms of 14-kDa, 18-kDa and a glycosylated 23-kDa form. Both narrow and wide pili are glycosylated.

Its subcellular location is the cell inner membrane. It localises to the cell outer membrane. The protein resides in the periplasm. Functionally, plays an essential role in the assembly of two types of T4P pili: a wide and a narrow that participate in natural transformation and twitching motility. Major component of the wide pilus that is essential for natural transformation working as a DNA translocator structure that spans the inner and outer membranes. In addition, participates in the assembly of the narrow pilus composed of the PilA5 subunit that is required for twitching motility. This is Type IV wide pilus major component PilA4 (pilA4) from Thermus thermophilus (strain ATCC BAA-163 / DSM 7039 / HB27).